The primary structure comprises 396 residues: Elongation factor Tu (396 aa).

Residues 10–205 form the tr-type G domain; it reads KPHVNIGTIG…ACDESIPDPE (196 aa). The interval 19-26 is G1; that stretch reads GHVDHGKT. 19–26 lines the GTP pocket; that stretch reads GHVDHGKT. Thr-26 is a binding site for Mg(2+). The tract at residues 62-66 is G2; it reads GITIN. The G3 stretch occupies residues 83 to 86; it reads DAPG. GTP is bound by residues 83-87 and 138-141; these read DAPGH and NKCD. A G4 region spans residues 138–141; sequence NKCD. A G5 region spans residues 175 to 177; the sequence is SAL.

The protein belongs to the TRAFAC class translation factor GTPase superfamily. Classic translation factor GTPase family. EF-Tu/EF-1A subfamily. As to quaternary structure, monomer.

The protein localises to the cytoplasm. The enzyme catalyses GTP + H2O = GDP + phosphate + H(+). GTP hydrolase that promotes the GTP-dependent binding of aminoacyl-tRNA to the A-site of ribosomes during protein biosynthesis. This Corynebacterium jeikeium (strain K411) protein is Elongation factor Tu.